A 91-amino-acid polypeptide reads, in one-letter code: Probable Fe(2+)-trafficking protein (91 aa).

Belongs to the Fe(2+)-trafficking protein family. As to quaternary structure, monomer.

Its function is as follows. Could be a mediator in iron transactions between iron acquisition and iron-requiring processes, such as synthesis and/or repair of Fe-S clusters in biosynthetic enzymes. This chain is Probable Fe(2+)-trafficking protein, found in Citrobacter koseri (strain ATCC BAA-895 / CDC 4225-83 / SGSC4696).